The sequence spans 403 residues: G2/mitotic-specific cyclin-B1 (403 aa).

The protein belongs to the cyclin family. Cyclin AB subfamily. As to quaternary structure, interacts with the CDC2 protein kinase to form a serine/threonine kinase holoenzyme complex also known as maturation promoting factor (MPF). The cyclin subunit imparts substrate specificity to the complex.

Its function is as follows. Essential for the control of the cell cycle at the G2/M (mitosis) transition. The chain is G2/mitotic-specific cyclin-B1 (ccnb1) from Anguilla japonica (Japanese eel).